A 356-amino-acid chain; its full sequence is Cyclin-D1-binding protein 1 (356 aa).

Residue alanine 2 is modified to N-acetylalanine. Interaction with TCF3 regions lie at residues alanine 2–valine 181 and isoleucine 147–leucine 356. The interaction with RPLP0 stretch occupies residues alanine 2–glutamate 187. A required for interaction with CCND1 region spans residues alanine 2–serine 205. Positions tyrosine 198–asparagine 224 are disordered. Positions leucine 236 to leucine 356 are interaction with RPLP0.

The protein belongs to the CCNDBP1 family. As to quaternary structure, interacts with CCND1 and GRAP2. May also interact with COPS5, RPLP0, SIRT6, SYF2 and TCF3. Phosphorylated. In terms of tissue distribution, expressed at high levels in brain, intestine, muscle and ovary and at lower levels in heart, kidney, liver, lung, spleen and testis.

It localises to the cytoplasm. Its subcellular location is the nucleus. Functionally, may negatively regulate cell cycle progression. May act at least in part via inhibition of the cyclin-D1/CDK4 complex, thereby preventing phosphorylation of RB1 and blocking E2F-dependent transcription. May be required for hepatocyte proliferation. The sequence is that of Cyclin-D1-binding protein 1 (Ccndbp1) from Mus musculus (Mouse).